A 270-amino-acid chain; its full sequence is MSRLHLHLISDSTGETLENIAKAAIAQFDDVEVVRHFWPMVRSESHLDRIMAEVRASPGMILFTLVNGELRSSLERRARMLDLPTVAALDAVTDALSRMLGQEAKARPGRQHVLDAAYFARVEAIQFTVAHDDGIGWENWEQADIILAGVSRTSKTPTSIYLANRGFKTANIPIVPESPPPSALFNLKRPMVVGLTTGLDRLVQVRRNRLLSLNQAPETSYVDDERVKAELAFARRMFADNGWPVIDVTRRSIEETAAAVIKLVEDRASA.

Position 149 to 156 (glycine 149 to threonine 156) interacts with ADP.

The protein belongs to the pyruvate, phosphate/water dikinase regulatory protein family. PDRP subfamily.

It catalyses the reaction N(tele)-phospho-L-histidyl/L-threonyl-[pyruvate, phosphate dikinase] + ADP = N(tele)-phospho-L-histidyl/O-phospho-L-threonyl-[pyruvate, phosphate dikinase] + AMP + H(+). The catalysed reaction is N(tele)-phospho-L-histidyl/O-phospho-L-threonyl-[pyruvate, phosphate dikinase] + phosphate + H(+) = N(tele)-phospho-L-histidyl/L-threonyl-[pyruvate, phosphate dikinase] + diphosphate. Its function is as follows. Bifunctional serine/threonine kinase and phosphorylase involved in the regulation of the pyruvate, phosphate dikinase (PPDK) by catalyzing its phosphorylation/dephosphorylation. The chain is Putative pyruvate, phosphate dikinase regulatory protein from Sphingopyxis alaskensis (strain DSM 13593 / LMG 18877 / RB2256) (Sphingomonas alaskensis).